The sequence spans 488 residues: Glutamyl-tRNA(Gln) amidotransferase subunit A (488 aa).

Catalysis depends on charge relay system residues K77 and S152. S176 functions as the Acyl-ester intermediate in the catalytic mechanism.

The protein belongs to the amidase family. GatA subfamily. Heterotrimer of A, B and C subunits.

It catalyses the reaction L-glutamyl-tRNA(Gln) + L-glutamine + ATP + H2O = L-glutaminyl-tRNA(Gln) + L-glutamate + ADP + phosphate + H(+). Allows the formation of correctly charged Gln-tRNA(Gln) through the transamidation of misacylated Glu-tRNA(Gln) in organisms which lack glutaminyl-tRNA synthetase. The reaction takes place in the presence of glutamine and ATP through an activated gamma-phospho-Glu-tRNA(Gln). This Latilactobacillus sakei subsp. sakei (strain 23K) (Lactobacillus sakei subsp. sakei) protein is Glutamyl-tRNA(Gln) amidotransferase subunit A.